The primary structure comprises 253 residues: Probable transcriptional regulatory protein Tlet_1011 (253 aa).

It belongs to the TACO1 family.

Its subcellular location is the cytoplasm. This chain is Probable transcriptional regulatory protein Tlet_1011, found in Pseudothermotoga lettingae (strain ATCC BAA-301 / DSM 14385 / NBRC 107922 / TMO) (Thermotoga lettingae).